The chain runs to 836 residues: Pentatricopeptide repeat-containing protein At2g39620 (836 aa).

PPR repeat units follow at residues 1–35, 36–62, 63–98, 99–133, 134–164, 165–199, 200–230, 233–263, 264–298, 299–333, 334–364, 365–399, 400–434, 435–465, 466–500, 501–535, 536–566, 568–602, 603–637, 638–668, 669–703, 704–734, and 740–770; these read MPIN…GLKP, HNQL…VRDP, GVVL…GIDP, DKYS…GLES, DVYI…MHVK, DVVT…CVDI, DHVS…VIKK, IFAF…VWRK, DESS…DVRM, NKVA…GLIG, DVSV…IEDR, DVVS…HIKP, NAVT…DIES, ELET…LPIK, DAVA…GVCP, DSRT…GFDS, ECHV…CGFE, STVS…KFQP, NAVT…GFCS, QTPV…ISNK, YIVS…ELKP, DSVS…MGER, and EVEH…MRVK. Residues 775 to 836 form a type E motif; degenerate region; the sequence is VWGALLNSSR…KVPACSWIEV (62 aa).

The protein belongs to the PPR family. PCMP-E subfamily.

In Arabidopsis thaliana (Mouse-ear cress), this protein is Pentatricopeptide repeat-containing protein At2g39620 (PCMP-E33).